The chain runs to 506 residues: Probable cytosol aminopeptidase (506 aa).

Mn(2+) is bound by residues Lys270 and Asp275. The active site involves Lys282. Mn(2+) is bound by residues Asp293, Asp352, and Glu354. The active site involves Arg356.

This sequence belongs to the peptidase M17 family. Mn(2+) is required as a cofactor.

It localises to the cytoplasm. The enzyme catalyses Release of an N-terminal amino acid, Xaa-|-Yaa-, in which Xaa is preferably Leu, but may be other amino acids including Pro although not Arg or Lys, and Yaa may be Pro. Amino acid amides and methyl esters are also readily hydrolyzed, but rates on arylamides are exceedingly low.. It catalyses the reaction Release of an N-terminal amino acid, preferentially leucine, but not glutamic or aspartic acids.. Its function is as follows. Presumably involved in the processing and regular turnover of intracellular proteins. Catalyzes the removal of unsubstituted N-terminal amino acids from various peptides. The protein is Probable cytosol aminopeptidase of Photorhabdus laumondii subsp. laumondii (strain DSM 15139 / CIP 105565 / TT01) (Photorhabdus luminescens subsp. laumondii).